The following is a 117-amino-acid chain: Large ribosomal subunit protein bL20 (117 aa).

Belongs to the bacterial ribosomal protein bL20 family.

In terms of biological role, binds directly to 23S ribosomal RNA and is necessary for the in vitro assembly process of the 50S ribosomal subunit. It is not involved in the protein synthesizing functions of that subunit. The chain is Large ribosomal subunit protein bL20 from Mesomycoplasma hyopneumoniae (strain 232) (Mycoplasma hyopneumoniae).